The sequence spans 311 residues: tRNA dimethylallyltransferase (311 aa).

9–16 contributes to the ATP binding site; that stretch reads GPTAVGKT. 11–16 is a substrate binding site; sequence TAVGKT. Residues 34 to 37 form an interaction with substrate tRNA region; sequence DSMQ.

This sequence belongs to the IPP transferase family. In terms of assembly, monomer. Mg(2+) serves as cofactor.

The enzyme catalyses adenosine(37) in tRNA + dimethylallyl diphosphate = N(6)-dimethylallyladenosine(37) in tRNA + diphosphate. Catalyzes the transfer of a dimethylallyl group onto the adenine at position 37 in tRNAs that read codons beginning with uridine, leading to the formation of N6-(dimethylallyl)adenosine (i(6)A). This chain is tRNA dimethylallyltransferase, found in Clostridium botulinum (strain Langeland / NCTC 10281 / Type F).